Reading from the N-terminus, the 215-residue chain is Probable phosphoglycerate mutase GpmB (215 aa).

Residues 8-15, 21-22, R58, R60, 82-85, 104-105, and 151-152 each bind substrate; these read RHGETQWN, QG, ELDM, RR, and GI. Residue H9 is the Tele-phosphohistidine intermediate of the active site. E82 (proton donor/acceptor) is an active-site residue.

The protein belongs to the phosphoglycerate mutase family. GpmB subfamily.

The enzyme catalyses (2R)-2-phosphoglycerate = (2R)-3-phosphoglycerate. It functions in the pathway carbohydrate degradation; glycolysis; pyruvate from D-glyceraldehyde 3-phosphate: step 3/5. In Citrobacter koseri (strain ATCC BAA-895 / CDC 4225-83 / SGSC4696), this protein is Probable phosphoglycerate mutase GpmB.